A 569-amino-acid chain; its full sequence is Phospholipase B-like protein D (569 aa).

The N-terminal stretch at 1 to 22 (MIIFKNLLKLLIILLTIKLYFC) is a signal peptide. Residues asparagine 93, asparagine 126, asparagine 181, asparagine 425, and asparagine 430 are each glycosylated (N-linked (GlcNAc...) asparagine).

This sequence belongs to the phospholipase B-like family.

The protein resides in the secreted. Probable phospholipase. The protein is Phospholipase B-like protein D (plbD) of Dictyostelium discoideum (Social amoeba).